The chain runs to 194 residues: Imidazoleglycerol-phosphate dehydratase (194 aa).

The protein belongs to the imidazoleglycerol-phosphate dehydratase family.

The protein resides in the cytoplasm. The enzyme catalyses D-erythro-1-(imidazol-4-yl)glycerol 3-phosphate = 3-(imidazol-4-yl)-2-oxopropyl phosphate + H2O. Its pathway is amino-acid biosynthesis; L-histidine biosynthesis; L-histidine from 5-phospho-alpha-D-ribose 1-diphosphate: step 6/9. The polypeptide is Imidazoleglycerol-phosphate dehydratase (Listeria innocua serovar 6a (strain ATCC BAA-680 / CLIP 11262)).